The sequence spans 432 residues: Glutamate-1-semialdehyde 2,1-aminomutase (432 aa).

An N6-(pyridoxal phosphate)lysine modification is found at lysine 265.

This sequence belongs to the class-III pyridoxal-phosphate-dependent aminotransferase family. HemL subfamily. In terms of assembly, homodimer. It depends on pyridoxal 5'-phosphate as a cofactor.

It is found in the cytoplasm. The catalysed reaction is (S)-4-amino-5-oxopentanoate = 5-aminolevulinate. It functions in the pathway porphyrin-containing compound metabolism; protoporphyrin-IX biosynthesis; 5-aminolevulinate from L-glutamyl-tRNA(Glu): step 2/2. The chain is Glutamate-1-semialdehyde 2,1-aminomutase from Vibrio cholerae serotype O1 (strain ATCC 39541 / Classical Ogawa 395 / O395).